Reading from the N-terminus, the 559-residue chain is Laccase-7 (559 aa).

Residues 1 to 28 (MVIPWCSSMMRLLWFLFALLLARSVADA) form the signal peptide. 3 N-linked (GlcNAc...) asparagine glycosylation sites follow: Asn32, Asn47, and Asn82. Plastocyanin-like domains are found at residues 36-152 (TVES…PRNG) and 163-316 (EVPI…YNTT). Cu cation is bound by residues His86 and His88. N-linked (GlcNAc...) asparagine glycosylation is found at Asn112 and Asn120. Cu cation is bound by residues His131 and His133. N-linked (GlcNAc...) asparagine glycosylation is found at Asn151, Asn210, Asn220, Asn257, Asn278, Asn314, Asn363, and Asn443. Residues 396–543 (FRLPSQMSLL…GMVFAVDNGT (148 aa)) form the Plastocyanin-like 3 domain. Cu cation-binding residues include His461, His464, and His466. The N-linked (GlcNAc...) asparagine glycan is linked to Asn484. The Cu cation site is built by His522, Cys523, His524, and His528. Asn541 carries an N-linked (GlcNAc...) asparagine glycan.

The protein belongs to the multicopper oxidase family. Requires Cu cation as cofactor.

The protein localises to the secreted. The protein resides in the extracellular space. Its subcellular location is the apoplast. The catalysed reaction is 4 hydroquinone + O2 = 4 benzosemiquinone + 2 H2O. In terms of biological role, lignin degradation and detoxification of lignin-derived products. The polypeptide is Laccase-7 (LAC7) (Oryza sativa subsp. japonica (Rice)).